Here is a 296-residue protein sequence, read N- to C-terminus: Zinc finger protein 75A (296 aa).

Positions 1-66 (MYFSQEEWEL…VSPEFKDSAG (66 aa)) constitute a KRAB domain. 5 consecutive C2H2-type zinc fingers follow at residues 161–183 (FKCQECGKTFRVSSDLIKHQRIH), 189–211 (YKCQQCDKRFRWSSDLNKHLTTH), 217–239 (YKCSWCGKSFSQNTNLHTHQRTH), 245–267 (FTCHECGKKFSQNSHLIKHRRTH), and 273–295 (YTCSICRRNFSRRSSLLRHQKLH).

This sequence belongs to the krueppel C2H2-type zinc-finger protein family.

It localises to the nucleus. Functionally, may be involved in transcriptional regulation. This is Zinc finger protein 75A (ZNF75A) from Homo sapiens (Human).